The sequence spans 1091 residues: ATP-citrate synthase (1091 aa).

One can recognise an ATP-grasp domain in the interval 4-265 (KAISEQTGKE…LDAKSGASLK (262 aa)). Positions 58, 66, 67, 109, 111, and 118 each coordinate ATP. Tyrosine 131 carries the post-translational modification Phosphotyrosine. Residue aspartate 216 participates in ATP binding. Mg(2+)-binding residues include aspartate 257, serine 260, and alanine 262. Serine 263 is subject to Phosphoserine. Citrate contacts are provided by glycine 309, asparagine 346, threonine 348, tyrosine 364, and arginine 379. Low complexity predominate over residues 442 to 457 (SGSTSTPAPSRTASFS). The segment at 442-471 (SGSTSTPAPSRTASFSESRTDEVAPAKKAK) is disordered. A Phosphothreonine modification is found at threonine 447. A Phosphoserine modification is found at serine 451. Serine 455 bears the Phosphoserine; by PKA and PKB/AKT1 or PKB/AKT2 or BCKDK mark. Serine 459 bears the Phosphoserine mark. 3 positions are modified to N6-acetyllysine; alternate: lysine 530, lysine 536, and lysine 544. Glycyl lysine isopeptide (Lys-Gly) (interchain with G-Cter in ubiquitin); alternate cross-links involve residues lysine 530, lysine 536, and lysine 544. Position 629 is a phosphothreonine (threonine 629). Phosphoserine is present on serine 653. A Phosphotyrosine modification is found at tyrosine 672. Histidine 750 (tele-phosphohistidine intermediate) is an active-site residue. 769 to 779 (LKEAGVFVPRS) serves as a coordination point for CoA. Serine 829 is modified (phosphoserine). N6-acetyllysine is present on residues lysine 938, lysine 958, lysine 968, and lysine 1067. Serine 1090 bears the Phosphoserine mark.

The protein in the N-terminal section; belongs to the succinate/malate CoA ligase beta subunit family. It in the C-terminal section; belongs to the succinate/malate CoA ligase alpha subunit family. Homotetramer. The cofactor is Mg(2+). Post-translationally, phosphorylated by PKA and GSK3 in a sequential manner; phosphorylation results in activation of its activity. Phosphorylation on Thr-447 and Ser-451 depends on the phosphorylation state of Ser-455. Phosphorylation on Ser-455 is decreased by prior phosphorylation on the other 2 residues. Phosphorylated at Ser-455 by BCKDK and dephosphorylated by protein phosphatase PPM1K. In terms of processing, ISGylated. Acetylated at Lys-530, Lys-536 and Lys-544 by KAT2B/PCAF. Acetylation is promoted by glucose and stabilizes the protein, probably by preventing ubiquitination at the same sites. Acetylation promotes de novo lipid synthesis. Deacetylated by SIRT2. Post-translationally, ubiquitinated at Lys-530, Lys-536 and Lys-544 by the BCR(KLHL25) E3 ubiquitin ligase complex and UBR4, leading to its degradation. Ubiquitination is probably inhibited by acetylation at same site. BCR(KLHL25)-mediated degradation of ACLY promotes fatty acid oxidation and is required for differentiation of inducible regulatory T (iTreg) cells.

The protein resides in the cytoplasm. It is found in the cytosol. It carries out the reaction oxaloacetate + acetyl-CoA + ADP + phosphate = citrate + ATP + CoA. Phosphorylation results in activation of its activity. Glucose 6-phosphate, fructose 6-phosphate, fructose 2,6-bisphosphate, ribulose 5-phosphate, and fructose 1,6-bisphosphate also act as activators. In terms of biological role, catalyzes the cleavage of citrate into oxaloacetate and acetyl-CoA, the latter serving as common substrate in multiple biochemical reactions in protein, carbohydrate and lipid metabolism. This chain is ATP-citrate synthase (ACLY), found in Bos taurus (Bovine).